A 695-amino-acid chain; its full sequence is Rho-related BTB domain-containing protein 1 (695 aa).

The segment at 1–210 (MDSDMDYERP…DNAIRAALIS (210 aa)) is rho-like. Residues 21–28 (GDNAVGKT), 84–88 (DTFGD), and 140–143 (CQLD) each bind GTP. BTB domains follow at residues 266–426 (ADVL…DEKE) and 484–551 (SDVT…SPNL). Residues 325–351 (SLGSAEEGKEGPQRTPQADPGASSGQD) form a disordered region.

This sequence belongs to the small GTPase superfamily. Rho family. In terms of tissue distribution, highest expression in heart and testis.

This Mus musculus (Mouse) protein is Rho-related BTB domain-containing protein 1 (Rhobtb1).